The following is a 203-amino-acid chain: MKKIAITCALLSSLVASSVWADAASDLKSRLDKVSSFHASFTQKVTDGSGAAVQEGQGDLWVKRPNLFNWHMTQPDESILVSDGKTLWFYNPFVEQATATWLKDATGNTPFMLIARNQSSDWQQYNIKQNGDDFVLTPKASNGNLKQFTINVGRDGTIHQFSAVEQDDQRSSYQLKSQQNGAVDAAKFTFTPPQGVTVDDQRK.

Positions 1–21 (MKKIAITCALLSSLVASSVWA) are cleaved as a signal peptide.

The protein belongs to the LolA family. Monomer.

It localises to the periplasm. Functionally, participates in the translocation of lipoproteins from the inner membrane to the outer membrane. Only forms a complex with a lipoprotein if the residue after the N-terminal Cys is not an aspartate (The Asp acts as a targeting signal to indicate that the lipoprotein should stay in the inner membrane). In Escherichia coli O139:H28 (strain E24377A / ETEC), this protein is Outer-membrane lipoprotein carrier protein.